The following is a 90-amino-acid chain: Small ribosomal subunit protein uS17 (90 aa).

Belongs to the universal ribosomal protein uS17 family. Part of the 30S ribosomal subunit.

Functionally, one of the primary rRNA binding proteins, it binds specifically to the 5'-end of 16S ribosomal RNA. This Burkholderia mallei (strain NCTC 10247) protein is Small ribosomal subunit protein uS17.